The primary structure comprises 508 residues: Aldehyde dehydrogenase (508 aa).

Residues glutamate 264 and cysteine 303 contribute to the active site.

Belongs to the aldehyde dehydrogenase family.

The enzyme catalyses acetaldehyde + NAD(+) + H2O = acetate + NADH + 2 H(+). It functions in the pathway organosulfur degradation. Its function is as follows. Catalyzes the NAD(+)-dependent oxidation of acetaldehyde to acetate. This is Aldehyde dehydrogenase from Paracoccus denitrificans (strain Pd 1222).